Consider the following 323-residue polypeptide: tRNA U34 carboxymethyltransferase (323 aa).

Carboxy-S-adenosyl-L-methionine is bound by residues lysine 91, tryptophan 105, lysine 110, glycine 130, 181-182, methionine 196, tyrosine 200, and arginine 315; that span reads IE.

It belongs to the class I-like SAM-binding methyltransferase superfamily. CmoB family. As to quaternary structure, homotetramer.

The catalysed reaction is carboxy-S-adenosyl-L-methionine + 5-hydroxyuridine(34) in tRNA = 5-carboxymethoxyuridine(34) in tRNA + S-adenosyl-L-homocysteine + H(+). Its function is as follows. Catalyzes carboxymethyl transfer from carboxy-S-adenosyl-L-methionine (Cx-SAM) to 5-hydroxyuridine (ho5U) to form 5-carboxymethoxyuridine (cmo5U) at position 34 in tRNAs. The chain is tRNA U34 carboxymethyltransferase from Sodalis glossinidius (strain morsitans).